A 247-amino-acid polypeptide reads, in one-letter code: Carboxy-S-adenosyl-L-methionine synthase (247 aa).

Residues Y39, G64–S66, D89–N90, D117–I118, N132, and R199 contribute to the S-adenosyl-L-methionine site.

This sequence belongs to the class I-like SAM-binding methyltransferase superfamily. Cx-SAM synthase family. As to quaternary structure, homodimer.

The catalysed reaction is prephenate + S-adenosyl-L-methionine = carboxy-S-adenosyl-L-methionine + 3-phenylpyruvate + H2O. In terms of biological role, catalyzes the conversion of S-adenosyl-L-methionine (SAM) to carboxy-S-adenosyl-L-methionine (Cx-SAM). This is Carboxy-S-adenosyl-L-methionine synthase from Escherichia coli O7:K1 (strain IAI39 / ExPEC).